The chain runs to 285 residues: Energy-coupling factor transporter ATP-binding protein EcfA2 (285 aa).

Positions 3 to 245 (IKIENLNHIY…VETLEKIGLA (243 aa)) constitute an ABC transporter domain. Residue 40–47 (GHTGSGKS) participates in ATP binding.

Belongs to the ABC transporter superfamily. Energy-coupling factor EcfA family. In terms of assembly, forms a stable energy-coupling factor (ECF) transporter complex composed of 2 membrane-embedded substrate-binding proteins (S component), 2 ATP-binding proteins (A component) and 2 transmembrane proteins (T component).

It is found in the cell membrane. Its function is as follows. ATP-binding (A) component of a common energy-coupling factor (ECF) ABC-transporter complex. Unlike classic ABC transporters this ECF transporter provides the energy necessary to transport a number of different substrates. In Clostridium perfringens (strain 13 / Type A), this protein is Energy-coupling factor transporter ATP-binding protein EcfA2.